A 381-amino-acid polypeptide reads, in one-letter code: MDEDINKDTNNNNNTTDSNNNNNNINEDEIIFNNYINNYSNYLNNNGISALDLLIQGRDGNNNIITFCSEIDQMLNGGTPLKKITEICGVPGIGKTNMAFQLLVNTSIPFDLGGVQGKAIYIDTEGSYSCQRVREMATHLVNHLECVLLKNPMTQTTYIPTVETVLNSIYYYRVYHYIEIISLIHQLPLFLEKNKDVKLIVVDSITYPFRCDFKDMGLRTRSLLSLAQNLMNIATRYNLAVVVMNQVTTKISPNQKESILVPYLGESWTHICTYRMVLFWKQKQRFCHLYKSPSFKSCFTPFDIVEYGIRDVGFNHPPPLNPEDQEQEKEKEKRKKKNNNNNNNNNNNNNNNNNNNNNNNNNNNNNNNNKNNDENEMYIEN.

A disordered region spans residues 1–24; sequence MDEDINKDTNNNNNTTDSNNNNNN. A compositionally biased stretch (low complexity) spans 8–24; that stretch reads DTNNNNNTTDSNNNNNN. Residue 89-96 participates in ATP binding; it reads GVPGIGKT. Residues 313–381 are disordered; that stretch reads GFNHPPPLNP…NDENEMYIEN (69 aa). Positions 323 to 377 form a coiled coil; sequence EDQEQEKEKEKRKKKNNNNNNNNNNNNNNNNNNNNNNNNNNNNNNNNKNNDENEM. A compositionally biased stretch (low complexity) spans 339–370; it reads NNNNNNNNNNNNNNNNNNNNNNNNNNNNNNNK.

It belongs to the RecA family. RAD51 subfamily.

The protein resides in the nucleus. Its function is as follows. Involved in the homologous recombination repair (HRR) pathway of double-stranded DNA breaks arising during DNA replication or induced by DNA-damaging agents. This chain is DNA repair protein RAD51 homolog 3 (rad51c), found in Dictyostelium discoideum (Social amoeba).